The primary structure comprises 480 residues: Beta-amyrin 28-monooxygenase (480 aa).

The helical transmembrane segment at Val-3 to Leu-23 threads the bilayer. Position 427 (Cys-427) interacts with heme.

Belongs to the cytochrome P450 family. Heme is required as a cofactor. In terms of tissue distribution, expressed in leaves, stems and fruit skin.

The protein resides in the membrane. The catalysed reaction is beta-amyrin + 3 reduced [NADPH--hemoprotein reductase] + 3 O2 = oleanolate + 3 oxidized [NADPH--hemoprotein reductase] + 4 H2O + 4 H(+). Catalyzes the carboxylation of beta-amyrin at the C-28 position to form oleanolic acid. May be involved in saponin biosynthesis in fruit skin. This Vitis vinifera (Grape) protein is Beta-amyrin 28-monooxygenase.